The sequence spans 335 residues: GTPase Obg (335 aa).

The region spanning 1-158 is the Obg domain; the sequence is MFLDQITIEL…RQVELELKLI (158 aa). An OBG-type G domain is found at 159 to 334; it reads ADIGLVGFPN…LNSLFTNRLS (176 aa). Residues 165 to 172, 190 to 194, 215 to 218, 285 to 288, and 315 to 317 contribute to the GTP site; these read GFPNAGKS, FTTLQ, DIPG, NKID, and SGL. The Mg(2+) site is built by Ser172 and Thr192.

This sequence belongs to the TRAFAC class OBG-HflX-like GTPase superfamily. OBG GTPase family. As to quaternary structure, monomer. Requires Mg(2+) as cofactor.

The protein resides in the cytoplasm. An essential GTPase which binds GTP, GDP and possibly (p)ppGpp with moderate affinity, with high nucleotide exchange rates and a fairly low GTP hydrolysis rate. Plays a role in control of the cell cycle, stress response, ribosome biogenesis and in those bacteria that undergo differentiation, in morphogenesis control. The sequence is that of GTPase Obg from Chlamydia caviae (strain ATCC VR-813 / DSM 19441 / 03DC25 / GPIC) (Chlamydophila caviae).